The following is a 398-amino-acid chain: uncharacterized protein (398 aa).

Lys212 carries the post-translational modification N6-(pyridoxal phosphate)lysine.

The protein belongs to the trans-sulfuration enzymes family. Pyridoxal 5'-phosphate serves as cofactor.

This is an uncharacterized protein from Schizosaccharomyces pombe (strain 972 / ATCC 24843) (Fission yeast).